We begin with the raw amino-acid sequence, 382 residues long: Inactive ubiquitin-specific protease 5 (382 aa).

Residues 16–141 (VPAEEERALI…GGPTLPRKAI (126 aa)) enclose the DUSP domain. One can recognise a USP domain in the interval 323 to 382 (TGLLNLGNTCFMNSAIQCLVHTPEFARYFREDYHREINWQNPLGMVVSTLSTSMALKPYV).

Belongs to the peptidase C19 family. In terms of tissue distribution, widely expressed with the highest expression in floral organs.

It localises to the cell membrane. Functionally, plays an important role in the development of floral organs and chloroplasts. Does not possess deubiquitinating enzyme activity in vitro. In Oryza sativa subsp. japonica (Rice), this protein is Inactive ubiquitin-specific protease 5.